A 454-amino-acid chain; its full sequence is uncharacterized protein (454 aa).

Positions 422–454 (EWLPPAHLDHGQPRTNSYFHPEKLLHDSDEDDP) are disordered.

Belongs to the Rv1128c/1148c/1588c/1702c/1945/3466 family.

This is an uncharacterized protein from Mycobacterium tuberculosis (strain CDC 1551 / Oshkosh).